A 634-amino-acid polypeptide reads, in one-letter code: MDKERISYHESVQKMYERIKADNMTNVWDRYEAQGIGGVPDRRCTFCMAGARCDLCSNGPCRSDASKDKRGVCGITADGMAMRMMLLRNVMGASTYHYHTDQTIRTLRETARNKTPYSIREPEKLKTFANRLGIDISGSDAEIALNLCEFVEKDFNRPAYEPSRIVEILAPPERKKRWEELGIFPGGIYGEMMLSTSSCLTNVDGYYVSLALKAMRLGIAMAYQSQIVNEYCQDVLFGIPRPHTMRVDLGVLDPEYVNVLPNGHEPFLGFAMVQLARKPEWQEKAKAAGAKGLRVIASIETGQEMIQRWEEDDVFYGFTGNWISQEAVLASRCVDLFAADMNCSLPVAPLYAEKYNFKLMPVSDLVAFEGIEERLNYDPVEAEEQAAKLLDMAVENFKNRNSSGEAALNFPAGEAVVGFSTESILDALGGTLDPLLDAIKSGAIKGVVGMVSCTTLRDYGQDVHSVAVVKELIKRNILVLSMGCGNAAMQVAGLCSPEAREYAGDSLKAVCEALGVPPVLSYGTCTDTGRLADLLGAISGALGGVPVPDLPVAAAAPEYMEQKATIDAIFALALGLYTYVNPVPTVTGAPNLVKLLTEDCREVTGGLLNVETDAVKAVDGIEQHIMEKRKKLGI.

Residues Cys-44, Cys-53, Cys-56, Cys-61, and Cys-73 each contribute to the [4Fe-4S] cluster site. Residues His-264, Cys-343, Cys-453, Cys-484, and Cys-525 each coordinate [Ni-4Fe-5S] cluster.

This sequence belongs to the Ni-containing carbon monoxide dehydrogenase family. As to quaternary structure, homodimer. Requires [4Fe-4S] cluster as cofactor. [Ni-4Fe-5S] cluster serves as cofactor.

It carries out the reaction CO + 2 oxidized [2Fe-2S]-[ferredoxin] + H2O = 2 reduced [2Fe-2S]-[ferredoxin] + CO2 + 2 H(+). Functionally, CODH oxidizes carbon monoxide coupled, via CooF, to the reduction of a hydrogen cation by a hydrogenase (possibly CooH). This is Carbon monoxide dehydrogenase 2 (cooS2) from Methanosarcina mazei (strain ATCC BAA-159 / DSM 3647 / Goe1 / Go1 / JCM 11833 / OCM 88) (Methanosarcina frisia).